A 597-amino-acid polypeptide reads, in one-letter code: Integrator complex subunit 11 (597 aa).

Zn(2+)-binding residues include His68, His70, Asp72, His73, His157, and Asp178. Residues 68 to 73 (HFHLDH) carry the HXHXDH motif motif. The active site involves Glu203. His414 contacts Zn(2+). Lys462 is a 1D-myo-inositol hexakisphosphate binding site.

Belongs to the metallo-beta-lactamase superfamily. RNA-metabolizing metallo-beta-lactamase-like family. INTS11 subfamily. In terms of assembly, belongs to the multiprotein complex Integrator, at least composed of IntS1, IntS2, IntS3, IntS4, omd/IntS5, IntS6, defl/IntS7, IntS8, IntS9, IntS10, IntS11, IntS12, asun/IntS13, IntS14 and IntS15. The core complex associates with protein phosphatase 2A subunits mts/PP2A and Pp2A-29B, to form the Integrator-PP2A (INTAC) complex. IntS11 is part of the RNA endonuclease subcomplex, composed of IntS4, IntS9, IntS11 and inositol hexakisphosphate (InsP6). Interacts with Brat1; interaction is required for the assembly of the RNA endonuclease subcomplex and inhibits the endonuclease activity of IntS11 before formation of mature integrator complex. Zn(2+) serves as cofactor. Expressed in neurons and glia of the larval and adult brain.

The protein resides in the nucleus. Its subcellular location is the cytoplasm. It localises to the cytosol. Its activity is regulated as follows. The RNA endonuclease activity is inhibited by Brat1 that forms hyrogen bond and hydrophobic interactions with the active site. Its function is as follows. RNA endonuclease component of the integrator complex, a multiprotein complex that terminates RNA polymerase II (Pol II) transcription in the promoter-proximal region of genes. The integrator complex provides a quality checkpoint during transcription elongation by driving premature transcription termination of transcripts that are unfavorably configured for transcriptional elongation: the complex terminates transcription by (1) catalyzing dephosphorylation of the C-terminal domain (CTD) of Pol II subunit Polr2A/Rbp1 and Spt5, and (2) degrading the exiting nascent RNA transcript via endonuclease activity. The integrator complex is also involved in the 3'-end processing of the U7 snRNA, and also the spliceosomal snRNAs U1, U2, U4 and U5. Within the integrator complex, IntS11 constitutes the RNA endonuclease subunit that degrades exiting nascent RNA transcripts. This chain is Integrator complex subunit 11, found in Drosophila melanogaster (Fruit fly).